Reading from the N-terminus, the 134-residue chain is D-ribose pyranase (134 aa).

Catalysis depends on His-20, which acts as the Proton donor. Residues Asp-28, His-99, and 123–125 (FSN) contribute to the substrate site.

It belongs to the RbsD / FucU family. RbsD subfamily. Homodecamer.

It is found in the cytoplasm. The enzyme catalyses beta-D-ribopyranose = beta-D-ribofuranose. The protein operates within carbohydrate metabolism; D-ribose degradation; D-ribose 5-phosphate from beta-D-ribopyranose: step 1/2. Functionally, catalyzes the interconversion of beta-pyran and beta-furan forms of D-ribose. This Staphylococcus carnosus (strain TM300) protein is D-ribose pyranase.